Reading from the N-terminus, the 257-residue chain is Spindlin-2C (257 aa).

The segment at 1–47 (MKTPHKKGAAKEQMGEGVGHHIGSTTIKKKKASQKRQRSRSSSRRSI) is disordered. Positions 27 to 43 (IKKKKASQKRQRSRSSS) are enriched in basic residues. Tudor-like domain regions lie at residues 48–97 (VGCR…LELH), 127–176 (IGKA…YQLL), and 208–253 (IGKH…YDLV). Histone H3K4me3 and H3R8me2a binding stretches follow at residues Glu136 and 244–246 (DFH).

Belongs to the SPIN/STSY family. As to quaternary structure, interacts with C11orf84/SPINDOC.

It localises to the nucleus. May be involved in the regulation of cell cycle progression. Exhibits H3K4me3-binding activity. The polypeptide is Spindlin-2C (Spin2c) (Mus musculus (Mouse)).